A 957-amino-acid polypeptide reads, in one-letter code: Bifunctional glutamine synthetase adenylyltransferase/adenylyl-removing enzyme (957 aa).

An adenylyl removase region spans residues 1–447 (MFSQLDFTGL…IFNQLIGEEE (447 aa)). An adenylyl transferase region spans residues 454–957 (VNEQLAIWQD…IWQQIFTDNE (504 aa)).

This sequence belongs to the GlnE family. Requires Mg(2+) as cofactor.

It carries out the reaction [glutamine synthetase]-O(4)-(5'-adenylyl)-L-tyrosine + phosphate = [glutamine synthetase]-L-tyrosine + ADP. The catalysed reaction is [glutamine synthetase]-L-tyrosine + ATP = [glutamine synthetase]-O(4)-(5'-adenylyl)-L-tyrosine + diphosphate. Functionally, involved in the regulation of glutamine synthetase GlnA, a key enzyme in the process to assimilate ammonia. When cellular nitrogen levels are high, the C-terminal adenylyl transferase (AT) inactivates GlnA by covalent transfer of an adenylyl group from ATP to specific tyrosine residue of GlnA, thus reducing its activity. Conversely, when nitrogen levels are low, the N-terminal adenylyl removase (AR) activates GlnA by removing the adenylyl group by phosphorolysis, increasing its activity. The regulatory region of GlnE binds the signal transduction protein PII (GlnB) which indicates the nitrogen status of the cell. This Haemophilus ducreyi (strain 35000HP / ATCC 700724) protein is Bifunctional glutamine synthetase adenylyltransferase/adenylyl-removing enzyme.